A 417-amino-acid polypeptide reads, in one-letter code: MAWFSLHLLHLLWAAAGTSTWARSSCSVPQAAQHLVDGLQVLLEDSVSSAAPPNPSVLIAMNLAGALSAEARELLADRLGASDSAGLSVGQLALTIMALNSSCRDPGNKVSVLYGQMEAWPPSSPSAPAWTFYGPSLAVLALCQEHPGRALPVAARLAKILAAGLSPFNTDTGAMVTLALTCMYNKIPEGSEEGYRTLFSQVLKDVVENISMRIKDNGIIGDVYSTGLAMQALSVTPEPPNKEWDCKKTMDTILKEIEQGKFHNPMSIAQILPSLKGKTYLDVPYVSCSPGHQVQPTLPSQPSPVPTSASNITVAYTINNQLKGVELVFNETIDVSVKDGSVLLVVLEEAQRRNPMFKFVTTMTSWGLVVSSINNIAESVHDRTYWQFLSGKTPLNEGVADYTPRDHEHITANFTQY.

A signal peptide spans 1–22 (MAWFSLHLLHLLWAAAGTSTWA). Disulfide bonds link Cys26–Cys246, Cys103–Cys288, and Cys143–Cys182. Asn100 carries N-linked (GlcNAc...) asparagine glycosylation. Asp171 is a binding site for cob(II)alamin. At Ser191 the chain carries Phosphoserine. Asn209 is a glycosylation site (N-linked (GlcNAc...) asparagine). Cob(II)alamin-binding residues include Asp222 and Gln270. Residues Asn311 and Asn330 are each glycosylated (N-linked (GlcNAc...) asparagine). Residues 365–370 (SWGLVV) and 386–395 (WQFLSGKTPL) each bind cob(II)alamin. Residue Asn413 is glycosylated (N-linked (GlcNAc...) asparagine).

Belongs to the eukaryotic cobalamin transport proteins family. In terms of assembly, interacts with CUBN (via CUB domains).

The protein resides in the secreted. In terms of biological role, promotes absorption of the essential vitamin cobalamin (Cbl) in the ileum. After interaction with CUBN, the CBLIF-cobalamin complex is internalized via receptor-mediated endocytosis. In Canis lupus familiaris (Dog), this protein is Cobalamin binding intrinsic factor (CBLIF).